A 310-amino-acid polypeptide reads, in one-letter code: N-acetyl-gamma-glutamyl-phosphate reductase (310 aa).

Cys117 is an active-site residue.

It belongs to the NAGSA dehydrogenase family. Type 2 subfamily.

The protein localises to the cytoplasm. It catalyses the reaction N-acetyl-L-glutamate 5-semialdehyde + phosphate + NADP(+) = N-acetyl-L-glutamyl 5-phosphate + NADPH + H(+). It functions in the pathway amino-acid biosynthesis; L-arginine biosynthesis; N(2)-acetyl-L-ornithine from L-glutamate: step 3/4. Its function is as follows. Catalyzes the NADPH-dependent reduction of N-acetyl-5-glutamyl phosphate to yield N-acetyl-L-glutamate 5-semialdehyde. This is N-acetyl-gamma-glutamyl-phosphate reductase from Rhizobium etli (strain ATCC 51251 / DSM 11541 / JCM 21823 / NBRC 15573 / CFN 42).